A 426-amino-acid chain; its full sequence is MFRTKRSALVRRLWRSRAPGGEDEEEGVGGGGGGGGLRGEGATDGRAYGAGGGGAGRAGCCLGKAVRGAKGHHHPHPPSSGAGAAGGAEADLKALTHSVLKKLKERQLELLLQAVESRGGTRTACLLLPGRLDCRLGPGAPASAQPAQPPSSYSLPLLLCKVFRWPDLRHSSEVKRLCCCESYGKINPELVCCNPHHLSRLCELESPPPPYSRYPMDFLKPTADCPDAVPSSDETGGTNYLAPGGLSDSQLLLEPGDRSHWCVVAYWEEKTRVGRLYCVQEPSLDIFYDLPQGNGFCLGQLNSDNKSQLVQKVRSKIGCGIQLTREVDGVWVYNRSSYPIFIKSATLDNPDSRTLLVHKVFPGFSIKAFDYEKAYSLQRPNDHEFMQQPWTGFTVQISFVKGWGQCYTRQFISSCPCWLEVIFNSR.

Residues 14–40 (WRSRAPGGEDEEEGVGGGGGGGGLRGE) form a disordered region. The segment covering 28-39 (VGGGGGGGGLRG) has biased composition (gly residues). 2 positions are modified to N6-acetyllysine; alternate: K64 and K70. Glycyl lysine isopeptide (Lys-Gly) (interchain with G-Cter in ubiquitin); alternate cross-links involve residues K64 and K70. In terms of domain architecture, MH1 spans 64–207 (KAVRGAKGHH…LSRLCELESP (144 aa)). Residues 67–76 (RGAKGHHHPH) are compositionally biased toward basic residues. The interval 67-88 (RGAKGHHHPHPPSSGAGAAGGA) is disordered. Residues C125, C180, C192, and H197 each coordinate Zn(2+). Positions 208 to 211 (PPPY) match the PY-motif motif. An important for interaction with SMURF2 region spans residues 208-217 (PPPYSRYPMD). S249 carries the phosphoserine modification. Residues 261 to 426 (WCVVAYWEEK…CWLEVIFNSR (166 aa)) enclose the MH2 domain.

Belongs to the dwarfin/SMAD family. As to quaternary structure, interacts with COPS5. Interacts with STAMBP. Interacts with NEDD4L. Interacts with RNF111, AXIN1 and AXIN2. Interacts with PPP1R15A. Interacts with ACVR1B, SMURF1, SMURF2 and TGFBR1; SMAD7 recruits SMURF1 and SMURF2 to the TGF-beta receptor and regulates its degradation. Interacts with WWP1. Interacts with PDPK1 (via PH domain). Interacts with TSC22D1/TSC-22; the interaction requires TGF-beta and the interaction is inhibited by TGFBR1. Post-translationally, phosphorylation on Ser-249 does not affect its stability, nuclear localization or inhibitory function in TGFB signaling; however it affects its ability to regulate transcription. Phosphorylated by PDPK1. In terms of processing, ubiquitinated by WWP1. Polyubiquitinated by RNF111, which is enhanced by AXIN1 and promotes proteasomal degradation. In response to TGF-beta, ubiquitinated by SMURF1; which promotes its degradation. Acetylation prevents ubiquitination and degradation mediated by SMURF1. Ubiquitous.

Its subcellular location is the nucleus. The protein resides in the cytoplasm. In terms of biological role, antagonist of signaling by TGF-beta (transforming growth factor) type 1 receptor superfamily members; has been shown to inhibit TGF-beta (Transforming growth factor) and activin signaling by associating with their receptors thus preventing SMAD2 access. Functions as an adapter to recruit SMURF2 to the TGF-beta receptor complex. Also acts by recruiting the PPP1R15A-PP1 complex to TGFBR1, which promotes its dephosphorylation. Positively regulates PDPK1 kinase activity by stimulating its dissociation from the 14-3-3 protein YWHAQ which acts as a negative regulator. This chain is Mothers against decapentaplegic homolog 7 (Smad7), found in Rattus norvegicus (Rat).